Consider the following 455-residue polypeptide: Nuclear receptor subfamily 6 group A member 1-B (455 aa).

The segment at residues 38 to 113 (ERWCLICGDR…MGMNRKAIRE (76 aa)) is a DNA-binding region (nuclear receptor). NR C4-type zinc fingers lie at residues 41 to 61 (CLICGDRASGLHYGIISCEGC) and 77 to 96 (CNRDKNCQMSRKQRNRCQYC). Positions 145–173 (EGSDLSDSWSHGYSNHSSPGNSLSEGGQS) are disordered. Residues 149–165 (LSDSWSHGYSNHSSPGN) are compositionally biased toward polar residues. Residues 215–446 (QTHTLTGQIL…YSCTTNQNPW (232 aa)) enclose the NR LBD domain.

This sequence belongs to the nuclear hormone receptor family. NR6 subfamily. In terms of assembly, homodimer.

Its subcellular location is the nucleus. Functionally, probable orphan nuclear receptor. Binds to a response element containing repeats of the motif 5'-AGGTCA-3'. The sequence is that of Nuclear receptor subfamily 6 group A member 1-B from Danio rerio (Zebrafish).